The primary structure comprises 433 residues: 23S rRNA (uracil(1939)-C(5))-methyltransferase RlmD (433 aa).

Positions 10–68 constitute a TRAM domain; the sequence is RTTTRQIITVSVNDLDSFGQGVARHNGKTLFIPGLLPQENAEVTVTEDKKQYARAKVVR. The [4Fe-4S] cluster site is built by C81, C87, C90, and C162. Q265, F294, N299, E315, N342, and D363 together coordinate S-adenosyl-L-methionine. The active-site Nucleophile is C389.

It belongs to the class I-like SAM-binding methyltransferase superfamily. RNA M5U methyltransferase family. RlmD subfamily.

It carries out the reaction uridine(1939) in 23S rRNA + S-adenosyl-L-methionine = 5-methyluridine(1939) in 23S rRNA + S-adenosyl-L-homocysteine + H(+). Functionally, catalyzes the formation of 5-methyl-uridine at position 1939 (m5U1939) in 23S rRNA. The chain is 23S rRNA (uracil(1939)-C(5))-methyltransferase RlmD from Shigella boydii serotype 4 (strain Sb227).